The following is a 356-amino-acid chain: Tyrosine recombinase XerS (356 aa).

The 106-residue stretch at 16–121 (IMPWYVLDYY…ALSSLYKYLT (106 aa)) folds into the Core-binding (CB) domain. The Tyr recombinase domain occupies 169–354 (AFLDYVDKEY…VNDEQKNALD (186 aa)). Active-site residues include R210, K234, H306, R309, and H332. The O-(3'-phospho-DNA)-tyrosine intermediate role is filled by Y341.

It belongs to the 'phage' integrase family. XerS subfamily.

Its subcellular location is the cytoplasm. FtsK is required for recombination. Its function is as follows. Site-specific tyrosine recombinase, which acts by catalyzing the cutting and rejoining of the recombining DNA molecules. Essential to convert dimers of the bacterial chromosome into monomers to permit their segregation at cell division. The protein is Tyrosine recombinase XerS of Streptococcus pyogenes serotype M18 (strain MGAS8232).